The chain runs to 291 residues: G1/S-specific cyclin-D2 (291 aa).

Residues 264-291 (QQQQSNPSKTIEELDQASTPTDVRDINL) are disordered. T282 carries the post-translational modification Phosphothreonine.

Belongs to the cyclin family. Cyclin D subfamily. As to quaternary structure, interacts with the CDK4 and CDK6 protein kinases to form a serine/threonine kinase holoenzyme complex. The cyclin subunit imparts substrate specificity to the complex. Post-translationally, phosphorylation at Thr-282 by MAP kinases is required for ubiquitination and degradation by the DCX(AMBRA1) complex. Ubiquitinated by the DCX(AMBRA1) complex during the transition from G1 to S cell phase, leading to its degradation: ubiquitination is dependent on Thr-282 phosphorylation. The DCX(AMBRA1) complex represents the major regulator of CCND2 stability during the G1/S transition.

Its subcellular location is the nucleus. The protein resides in the cytoplasm. It localises to the nucleus membrane. Functionally, regulatory component of the cyclin D2-CDK4 (DC) complex that phosphorylates and inhibits members of the retinoblastoma (RB) protein family including RB1 and regulates the cell-cycle during G(1)/S transition. Phosphorylation of RB1 allows dissociation of the transcription factor E2F from the RB/E2F complex and the subsequent transcription of E2F target genes which are responsible for the progression through the G(1) phase. Hypophosphorylates RB1 in early G(1) phase. Cyclin D-CDK4 complexes are major integrators of various mitogenenic and antimitogenic signals. The polypeptide is G1/S-specific cyclin-D2 (CCND2) (Gallus gallus (Chicken)).